Reading from the N-terminus, the 29-residue chain is GLPVCGETCVTGSCYTPGCTCSWPVCTRN.

The segment at residues Gly1–Asn29 is a cross-link (cyclopeptide (Gly-Asn)). Intrachain disulfides connect Cys5-Cys19, Cys9-Cys21, and Cys14-Cys26.

This is a cyclic peptide. Expressed in leaves, petals, petioles, and runners but not in roots (at protein level).

Its function is as follows. Probably participates in a plant defense mechanism. The protein is Cycloviolacin-O21 of Viola odorata (Sweet violet).